A 429-amino-acid chain; its full sequence is Serine--tRNA ligase (429 aa).

235–237 (TAE) contacts L-serine. Residue 266–268 (RSE) coordinates ATP. Glutamate 289 contacts L-serine. 353–356 (EISS) contacts ATP. Serine 389 is an L-serine binding site.

This sequence belongs to the class-II aminoacyl-tRNA synthetase family. Type-1 seryl-tRNA synthetase subfamily. In terms of assembly, homodimer. The tRNA molecule binds across the dimer.

It localises to the cytoplasm. The enzyme catalyses tRNA(Ser) + L-serine + ATP = L-seryl-tRNA(Ser) + AMP + diphosphate + H(+). The catalysed reaction is tRNA(Sec) + L-serine + ATP = L-seryl-tRNA(Sec) + AMP + diphosphate + H(+). The protein operates within aminoacyl-tRNA biosynthesis; selenocysteinyl-tRNA(Sec) biosynthesis; L-seryl-tRNA(Sec) from L-serine and tRNA(Sec): step 1/1. Its function is as follows. Catalyzes the attachment of serine to tRNA(Ser). Is also able to aminoacylate tRNA(Sec) with serine, to form the misacylated tRNA L-seryl-tRNA(Sec), which will be further converted into selenocysteinyl-tRNA(Sec). This is Serine--tRNA ligase from Haemophilus influenzae (strain 86-028NP).